The chain runs to 257 residues: Protein IMPACT homolog (257 aa).

The RWD domain occupies 9–102 (AEIESLASIF…SLVQDFIRDL (94 aa)).

It belongs to the IMPACT family. In terms of assembly, interacts with gcn-1; prevents the interaction of gcn-1 with gcn-2 and inhibits gcn-2 kinase activity. Interaction with rpl-39; this interaction occurs in a gcn-1-independent manner. Associates with ribosomes; this interaction occurs in a gcn-1-independent manner. Associates with actin; this interaction occurs in a gcn-1-independent manner.

It localises to the cytoplasm. In terms of biological role, translational regulator that ensures constant high levels of translation under amino acid starvation. Plays a role as a negative regulator of the gcn-2 kinase activity; impairs gcn-1-mediated gcn-2 activation, and hence gcn-2-mediated eIF-2-alpha phosphorylation and subsequent down-regulation of protein synthesis in amino acid-starved cells. Plays a role in differentiation of neuronal cells by stimulating neurite outgrowth. This Caenorhabditis elegans protein is Protein IMPACT homolog.